Here is a 376-residue protein sequence, read N- to C-terminus: Zinc transporter 7 (376 aa).

Residues 1–37 (MLPLSIKDDEYKPPKFNLFGKISGWFRSILSDKTSRN) lie on the Cytoplasmic side of the membrane. A helical transmembrane segment spans residues 38–58 (LFFFLCLNLSFAFVELLYGIW). The Lumenal segment spans residues 59 to 67 (SNCLGLISD). A helical transmembrane segment spans residues 68 to 88 (SFHMFFDSTAILAGLAASVIS). Residues 89-102 (KWRDNDAFSYGYVR) are Cytoplasmic-facing. The chain crosses the membrane as a helical span at residues 103–123 (AEVLAGFVNGLFLIFTAFFIF). At 124–140 (SEGVERALAPPDVHHER) the chain is on the lumenal side. A helical membrane pass occupies residues 141–161 (LLLVSILGFVVNLIGIFVFKH). The his-rich loop stretch occupies residues 161–218 (HGGHGHSHGSGHGHSHSLFNGALDQAHGHVDHCHSHEVKHGAAHSHDHAHGHGHFHSH). Residues 162–236 (GGHGHSHGSG…TGPSRQILQG (75 aa)) lie on the Cytoplasmic side of the membrane. The segment covering 194 to 222 (HSHEVKHGAAHSHDHAHGHGHFHSHDGPS) has biased composition (basic and acidic residues). The segment at 194-226 (HSHEVKHGAAHSHDHAHGHGHFHSHDGPSLKET) is disordered. A helical transmembrane segment spans residues 237 to 257 (VFLHILADTLGSIGVIASAIM). Topologically, residues 258–262 (MQNFG) are lumenal. The chain crosses the membrane as a helical span at residues 263–283 (LMIADPICSILIAILIVVSVI). Topologically, residues 284-376 (PLLRESVGIL…LYVQIDFAAM (93 aa)) are cytoplasmic.

Belongs to the cation diffusion facilitator (CDF) transporter (TC 2.A.4) family. SLC30A subfamily. Homooligomer. As to expression, highly expressed in megakaryocytes and other bone marrow cells and in the epithelium of the small intestine. Expressed in testis (in Leydig cells), adrenal gland (in adrenal medula, zona fasciculata and zona of reticularis), and pituitary gland (in somatotropic cells).

The protein localises to the golgi apparatus membrane. The protein resides in the cytoplasmic vesicle. It localises to the golgi apparatus. It is found in the trans-Golgi network. Its subcellular location is the sarcoplasmic reticulum. The protein localises to the mitochondrion. The catalysed reaction is Zn(2+)(in) = Zn(2+)(out). Functionally, zinc ion transporter mediating zinc entry from the cytosol into the lumen of organelles along the secretory pathway. By contributing to zinc ion homeostasis within the early secretory pathway, regulates the activation and folding of enzymes like alkaline phosphatases. In Homo sapiens (Human), this protein is Zinc transporter 7.